The following is a 1871-amino-acid chain: Girdin (1871 aa).

Positions 12–132 (QFMTSPLVTW…KLLLLLLGCA (121 aa)) constitute a Calponin-homology (CH) domain. Residues 196-425 (HLKRLIDERD…EMAQKQSMDE (230 aa)) adopt a coiled-coil conformation. S233, S237, and S449 each carry phosphoserine. A coiled-coil region spans residues 458 to 1385 (TSSRLLKLEM…KIMDQYKFYD (928 aa)). Disordered stretches follow at residues 816-842 (ENKSLEQETSQLEKDKKQLEKENKRLR) and 1010-1035 (RQDEERMVQSSPPISGEDNKWERESQ). A Phosphoserine modification is found at S1020. The segment covering 1026 to 1035 (EDNKWERESQ) has biased composition (basic and acidic residues). Phosphoserine is present on S1387. The phosphoinositide-binding stretch occupies residues 1390-1408 (RRRGNWITLKMRKLIKSKK). Basic and acidic residues predominate over residues 1407 to 1416 (KKDINRERQK). Disordered regions lie at residues 1407–1459 (KKDI…LGTK) and 1559–1601 (TTSF…SNNN). Position 1417 is a phosphoserine; by PKB/AKT1 (S1417). Polar residues-rich tracts occupy residues 1417-1430 (SLTLTPTRSDSSEG), 1445-1459 (VGSNSLEDGQTLGTK), and 1559-1578 (TTSFEDISPQGVSDDSSTGS). Phosphothreonine is present on T1421. Positions 1672-1702 (KTGSPGSEVVTLQQFLEESNKLTSVQIKSSS) match the GBA motif. At T1673 the chain carries Phosphothreonine. A Phosphoserine modification is found at S1675. S1690 is subject to Phosphoserine; by PKC/PRKCQ. The SH2-like; required for interaction with growth factor receptors stretch occupies residues 1713–1823 (SLSVSSDFLG…GTTRRTSIHD (111 aa)). The residue at position 1717 (S1717) is a Phosphoserine. Residues 1736 to 1871 (SGKTPGDFYD…KSRSREQQSS (136 aa)) form a disordered region. The segment covering 1743-1763 (FYDRRTTKPEFLRPGPRKTED) has biased composition (basic and acidic residues). Residues Y1765 and Y1799 each carry the phosphotyrosine modification. 2 stretches are compositionally biased toward polar residues: residues 1787–1799 (SSLSRQSKDSNPY) and 1807–1818 (SVISTAEGTTRR). 2 positions are modified to phosphoserine: S1820 and S1837. The span at 1820-1830 (SIHDFLTKDSR) shows a compositional bias: basic and acidic residues. Positions 1838–1851 (PPAAADSNTTAASN) are enriched in low complexity. The segment covering 1854 to 1871 (KVQESRNSKSRSREQQSS) has biased composition (basic and acidic residues).

The protein belongs to the CCDC88 family. In terms of assembly, homodimer. Interacts (via GBA motif) with guanine nucleotide-binding protein G(i) alpha subunits GNAI1, GNAI2 and GNAI3. Also interacts (via GNA motif) with guanine nucleotide-binding protein G(s) alpha subunit GNAS. Interaction with G(i) alpha subunits occurs before interaction with GNAS and is regulated by phosphorylation; phosphorylation at Ser-1675 enhances binding to G(i) alpha subunits while phosphorylation at Ser-1690 abolishes G(i) alpha subunit binding, promoting binding to GNAS. Interacts (via C-terminal SH2-like region) with growth factor receptors EGFR, INSR and KDR/VEGFR2 (via their autophosphorylated cytoplasmic tails). Forms a complex with EGFR and GNAI3 which leads to enhanced EGFR signaling and triggering of cell migration; ligand stimulation is required for recruitment of GNAI3 to the complex. Interacts (tyrosine-phosphorylated form) with phosphatidylinositol 3-kinase (PI3K) regulatory subunit PIK3R1/p85a (via SH2 domains); the interaction enables recruitment of PIK3R1 to the EGFR receptor, enhancing PI3K activity and cell migration. Interacts with serine/threonine-protein kinase PRKCQ; the interaction leads to phosphorylation of CCDC88A and inhibition of its guanine nucleotide exchange factor activity. Interacts (via C-terminus) with DISC1; the interaction is direct. Interacts with AKT proteins; the interaction is inhibited in the presence of DISC1. Interacts with AKT1/PKB (via C-terminus). The non-phosphorylated form interacts with phosphatidylinositol 4-phosphate [PI(4)P] and weakly with phosphatidylinositol 3-phosphate [PI(3)P]. Interacts with microtubules. Interacts with actin. In terms of processing, phosphorylation is induced by epidermal growth factor (EGF) in a phosphoinositide 3-kinase (PI3K)-dependent manner. Phosphorylation by AKT1/PKB is necessary for delocalization from the cell membrane and for cell migration. Phosphorylated on tyrosine residues which promotes binding to phosphatidylinositol 3-kinase (PI3K) regulatory subunit PIK3R1/p85a and enhances PI3K activity. Tyrosine-phosphorylated by both receptor and non-receptor tyrosine kinases in vitro. Tyrosine phosphorylation is required for AKT1-dependent phosphorylation of Ser-1417. Phosphorylation at Ser-1690 by PRKCQ disrupts interaction with GNAI3 and inhibits guanine nucleotide exchange factor activity. As to expression, expressed ubiquitously.

The protein resides in the cell membrane. It localises to the cytoplasm. Its subcellular location is the cytosol. It is found in the cytoplasmic vesicle. The protein localises to the cell projection. The protein resides in the lamellipodium. It localises to the cytoskeleton. Its subcellular location is the cilium basal body. It is found in the microtubule organizing center. The protein localises to the centrosome. The protein resides in the centriole. Bifunctional modulator of guanine nucleotide-binding proteins (G proteins). Acts as a non-receptor guanine nucleotide exchange factor which binds to and activates guanine nucleotide-binding protein G(i) alpha subunits. Also acts as a guanine nucleotide dissociation inhibitor for guanine nucleotide-binding protein G(s) subunit alpha GNAS. Essential for cell migration. Interacts in complex with G(i) alpha subunits with the EGFR receptor, retaining EGFR at the cell membrane following ligand stimulation and promoting EGFR signaling which triggers cell migration. Binding to Gi-alpha subunits displaces the beta and gamma subunits from the heterotrimeric G-protein complex which enhances phosphoinositide 3-kinase (PI3K)-dependent phosphorylation and kinase activity of AKT1/PKB. Phosphorylation of AKT1/PKB induces the phosphorylation of downstream effectors GSK3 and FOXO1/FKHR, and regulates DNA replication and cell proliferation. Binds in its tyrosine-phosphorylated form to the phosphatidylinositol 3-kinase (PI3K) regulatory subunit PIK3R1 which enables recruitment of PIK3R1 to the EGFR receptor, enhancing PI3K activity and cell migration. Plays a role as a key modulator of the AKT-mTOR signaling pathway, controlling the tempo of the process of newborn neuron integration during adult neurogenesis, including correct neuron positioning, dendritic development and synapse formation. Inhibition of G(s) subunit alpha GNAS leads to reduced cellular levels of cAMP and suppression of cell proliferation. Essential for the integrity of the actin cytoskeleton. Required for formation of actin stress fibers and lamellipodia. May be involved in membrane sorting in the early endosome. Plays a role in ciliogenesis and cilium morphology and positioning and this may partly be through regulation of the localization of scaffolding protein CROCC/Rootletin. This chain is Girdin (CCDC88A), found in Homo sapiens (Human).